Reading from the N-terminus, the 170-residue chain is Adenine phosphoribosyltransferase (170 aa).

This sequence belongs to the purine/pyrimidine phosphoribosyltransferase family. As to quaternary structure, homodimer.

Its subcellular location is the cytoplasm. It catalyses the reaction AMP + diphosphate = 5-phospho-alpha-D-ribose 1-diphosphate + adenine. Its pathway is purine metabolism; AMP biosynthesis via salvage pathway; AMP from adenine: step 1/1. Its function is as follows. Catalyzes a salvage reaction resulting in the formation of AMP, that is energically less costly than de novo synthesis. This chain is Adenine phosphoribosyltransferase, found in Lysinibacillus sphaericus (strain C3-41).